A 650-amino-acid polypeptide reads, in one-letter code: GATA zinc finger domain-containing protein 11 (650 aa).

Residues 16–79 (LYNNTNTNSN…NSSNSLSSSF (64 aa)) are compositionally biased toward low complexity. Disordered stretches follow at residues 16–96 (LYNN…SGYN), 111–181 (KRSN…TTPL), 221–335 (NNSN…NNNK), and 409–515 (RIFG…NKRK). Residues 116–129 (LDDNMSVPTLQNFT) show a composition bias toward polar residues. Low complexity-rich tracts occupy residues 130–180 (NNNN…PTTP) and 221–260 (NNSNGINNNNHNNNHNNSNNNNNNNSNSNSNNHNNHNNNN). Residues 261 to 272 (QSIVPQSIHLQS) show a composition bias toward polar residues. Residues 273–334 (TTPQIQPLSL…NNSYNTNNNN (62 aa)) show a composition bias toward low complexity. The segment covering 425-434 (RPRRFRKSKV) has biased composition (basic residues). The segment covering 442–511 (HNNNNNNINN…GNGNTNSTNN (70 aa)) has biased composition (low complexity). The segment at 522–547 (CTSCGTTSSPEWRKGPAGNQSLCNAC) adopts a GATA-type zinc-finger fold. Residues 619–650 (QQQQQQQQQQQNHHHQQLQQQQQQQQQQQLHH) form a disordered region.

Functionally, transcription factor that regulates morphogenetic cell movement during development. The protein is GATA zinc finger domain-containing protein 11 (gtaK) of Dictyostelium discoideum (Social amoeba).